Consider the following 441-residue polypeptide: Probable tRNA pseudouridine synthase D (441 aa).

The active-site Nucleophile is the Asp89. The 226-residue stretch at 168–393 (GVPNFFGVQR…SKGTRREVLL (226 aa)) folds into the TRUD domain.

This sequence belongs to the pseudouridine synthase TruD family.

It catalyses the reaction uridine(13) in tRNA = pseudouridine(13) in tRNA. In terms of biological role, could be responsible for synthesis of pseudouridine from uracil-13 in transfer RNAs. In Methanosarcina acetivorans (strain ATCC 35395 / DSM 2834 / JCM 12185 / C2A), this protein is Probable tRNA pseudouridine synthase D.